Consider the following 210-residue polypeptide: NADH dehydrogenase [ubiquinone] iron-sulfur protein 8, mitochondrial (210 aa).

The N-terminal 34 residues, 1-34, are a transit peptide targeting the mitochondrion; it reads MRCLTMPTLLRALAQAAHTGPPGGRTLHSSAVAA. 2 4Fe-4S ferredoxin-type domains span residues 102–131 and 141–170; these read RRYP…IEAE and TRYD…EGPN. [4Fe-4S] cluster contacts are provided by Cys-111, Cys-114, Cys-117, Cys-121, Cys-150, Cys-153, Cys-156, and Cys-160.

This sequence belongs to the complex I 23 kDa subunit family. As to quaternary structure, core subunit of respiratory chain NADH dehydrogenase (Complex I) which is composed of 45 different subunits. This is a component of the iron-sulfur (IP) fragment of the enzyme. Interacts with RAB5IF. [4Fe-4S] cluster is required as a cofactor.

The protein localises to the mitochondrion inner membrane. It catalyses the reaction a ubiquinone + NADH + 5 H(+)(in) = a ubiquinol + NAD(+) + 4 H(+)(out). In terms of biological role, core subunit of the mitochondrial membrane respiratory chain NADH dehydrogenase (Complex I) which catalyzes electron transfer from NADH through the respiratory chain, using ubiquinone as an electron acceptor. Essential for the catalytic activity and assembly of complex I. This Macaca fascicularis (Crab-eating macaque) protein is NADH dehydrogenase [ubiquinone] iron-sulfur protein 8, mitochondrial (NDUFS8).